The sequence spans 197 residues: Nucleoside triphosphate pyrophosphatase (197 aa).

The active-site Proton acceptor is the Asp71.

Belongs to the Maf family. Requires a divalent metal cation as cofactor.

It is found in the cytoplasm. It catalyses the reaction a ribonucleoside 5'-triphosphate + H2O = a ribonucleoside 5'-phosphate + diphosphate + H(+). It carries out the reaction a 2'-deoxyribonucleoside 5'-triphosphate + H2O = a 2'-deoxyribonucleoside 5'-phosphate + diphosphate + H(+). Nucleoside triphosphate pyrophosphatase. May have a dual role in cell division arrest and in preventing the incorporation of modified nucleotides into cellular nucleic acids. In Synechococcus sp. (strain JA-3-3Ab) (Cyanobacteria bacterium Yellowstone A-Prime), this protein is Nucleoside triphosphate pyrophosphatase.